The chain runs to 291 residues: NAD kinase (291 aa).

The active-site Proton acceptor is D73. NAD(+) contacts are provided by residues D73–G74, N147–D148, R175, D177, and Q246.

The protein belongs to the NAD kinase family. A divalent metal cation is required as a cofactor.

The protein resides in the cytoplasm. The catalysed reaction is NAD(+) + ATP = ADP + NADP(+) + H(+). Its function is as follows. Involved in the regulation of the intracellular balance of NAD and NADP, and is a key enzyme in the biosynthesis of NADP. Catalyzes specifically the phosphorylation on 2'-hydroxyl of the adenosine moiety of NAD to yield NADP. In Chromobacterium violaceum (strain ATCC 12472 / DSM 30191 / JCM 1249 / CCUG 213 / NBRC 12614 / NCIMB 9131 / NCTC 9757 / MK), this protein is NAD kinase.